Here is a 64-residue protein sequence, read N- to C-terminus: Translational regulator CsrA 1 (64 aa).

It belongs to the CsrA/RsmA family. Homodimer; the beta-strands of each monomer intercalate to form a hydrophobic core, while the alpha-helices form wings that extend away from the core.

The protein localises to the cytoplasm. In terms of biological role, a key translational regulator that binds mRNA to regulate translation initiation and/or mRNA stability. Mediates global changes in gene expression, shifting from rapid growth to stress survival by linking envelope stress, the stringent response and the catabolite repression systems. Usually binds in the 5'-UTR; binding at or near the Shine-Dalgarno sequence prevents ribosome-binding, repressing translation, binding elsewhere in the 5'-UTR can activate translation and/or stabilize the mRNA. Its function is antagonized by small RNA(s). This chain is Translational regulator CsrA 1, found in Pseudomonas syringae pv. tomato (strain ATCC BAA-871 / DC3000).